The chain runs to 524 residues: Phosphoenolpyruvate carboxykinase (ATP) (524 aa).

The substrate site is built by Arg-52, Tyr-188, and Lys-194. ATP contacts are provided by residues Lys-194, His-213, and 229–237 (GLSGTGKTT). Residues Lys-194 and His-213 each coordinate Mn(2+). Asp-250 contacts Mn(2+). Glu-278, Arg-314, and Thr-439 together coordinate ATP. Arg-314 contributes to the substrate binding site.

Belongs to the phosphoenolpyruvate carboxykinase (ATP) family. It depends on Mn(2+) as a cofactor.

Its subcellular location is the cytoplasm. The catalysed reaction is oxaloacetate + ATP = phosphoenolpyruvate + ADP + CO2. It participates in carbohydrate biosynthesis; gluconeogenesis. Involved in the gluconeogenesis. Catalyzes the conversion of oxaloacetate (OAA) to phosphoenolpyruvate (PEP) through direct phosphoryl transfer between the nucleoside triphosphate and OAA. The sequence is that of Phosphoenolpyruvate carboxykinase (ATP) from Campylobacter jejuni (strain RM1221).